The following is a 232-amino-acid chain: MSFENKLPTPLENNDAKGHMVCTLNKTTDARRAAETLSIAFSNSPAFHFICKKILNIPLAEKVPTRTITTDIISPFLDSPYGEISEVNTFDAVAVWSLPPHVPKARSNDAKFNKDFIDDLNARVKQVIPNGINYYYLFCIGKNLNEKGIRGSVRTIFEEYKRRADEENCAIVLEAIAEHAKSVYEYFGFRNYMTFKYGECEVDSNGNCDPNGEGFTAYLMIYHKDGNKVLKE.

It is found in the cytoplasm. The protein localises to the nucleus. This is an uncharacterized protein from Saccharomyces cerevisiae (strain ATCC 204508 / S288c) (Baker's yeast).